A 239-amino-acid chain; its full sequence is Ribosomal RNA small subunit methyltransferase G (239 aa).

S-adenosyl-L-methionine-binding positions include G78, F83, 129–130, and R148; that span reads AE.

This sequence belongs to the methyltransferase superfamily. RNA methyltransferase RsmG family.

Its subcellular location is the cytoplasm. In terms of biological role, specifically methylates the N7 position of a guanine in 16S rRNA. The chain is Ribosomal RNA small subunit methyltransferase G from Clostridium tetani (strain Massachusetts / E88).